The following is a 408-amino-acid chain: MLSPTFILWDVGYPFYTYGSIIIIALIIWQVKKNHRGLKLGPNRNCCRRHQKVKQRAKEKTPRARRHSRKEADKPLELLSIMRSQGWLPQEGSVRRLLCADPCCQICNSVALEIQQLISGETTLTTPTSSGPSQGSSCLEVLSMSSLSFDQSQESLPFKQLSLPSATRTVSQLTNQKSVTQSAAKSATKPATKSVSAISIRQYWAGHQQLRQECRGPELPLDAGALSSSSVEEPRIPVNQHVKKKSNSEGILKKQEAVEADLGNKLKHFTQWINPDMKGQGRKECILRCKDEKVAKTKTKKAEKSPPSTKRPMKGAKLEKEEGFFDALQCLDSEFQRQSMESVRSSQSCFLPLSSGSSKRSPLLTCATQPENPSHVSVSTSAEGTCLPQESTQSRKKELRGSQTSASS.

The helical transmembrane segment at 11–31 (VGYPFYTYGSIIIIALIIWQV) threads the bilayer. Residues 51-71 (QKVKQRAKEKTPRARRHSRKE) are disordered. A Phosphoserine modification is found at S152. 2 disordered regions span residues 297-316 (TKTKKAEKSPPSTKRPMKGA) and 351-408 (LPLS…SASS). A compositionally biased stretch (polar residues) spans 351–392 (LPLSSGSSKRSPLLTCATQPENPSHVSVSTSAEGTCLPQEST).

This sequence belongs to the SPATA31 family.

It localises to the membrane. The chain is Protein SPATA31F3 (SPATA31F3) from Bos taurus (Bovine).